The following is an 87-amino-acid chain: Diazepam-binding inhibitor-like 5 (87 aa).

Residues 2 to 87 form the ACB domain; sequence SQVEFEMACA…VEELKKNETC (86 aa). An acyl-CoA contacts are provided by residues 29–33, lysine 55, and tyrosine 74; that span reads YSFYK.

This sequence belongs to the ACBP family. Testis.

It localises to the cytoplasm. May be involved in the energy metabolism of the mature sperm. The protein is Diazepam-binding inhibitor-like 5 (Dbil5) of Rattus norvegicus (Rat).